The sequence spans 322 residues: Sideroflexin-2 (322 aa).

M1 carries the N-acetylmethionine modification. 5 helical membrane passes run 99–119 (GMLITGFMLQFYRTMPAVIFW), 147–167 (ALSYFTATTTAVATAVGMNMW), 174–194 (LVGRWVPFAAVAAANCVNIPM), 223–243 (VGIAQVVISRITMAAPGMILL), and 266–286 (LQVLLCGCFLLFMVPVACGLF).

The protein belongs to the sideroflexin family. In terms of tissue distribution, expressed in brain, heart, kidney, spleen, thymus, liver, stomach and skin.

It is found in the mitochondrion inner membrane. It localises to the mitochondrion outer membrane. It catalyses the reaction L-serine(in) = L-serine(out). Functionally, mitochondrial amino-acid transporter that mediates transport of serine into mitochondria. Involved in mitochondrial iron homeostasis by regulating heme biosynthesis. This Mus musculus (Mouse) protein is Sideroflexin-2.